Consider the following 1040-residue polypeptide: Isoleucine--tRNA ligase (1040 aa).

Residues 47–57 (PYCSGSIHLGT) carry the 'HIGH' region motif. Residues 605–609 (KMSKS) carry the 'KMSKS' region motif. K608 serves as a coordination point for ATP.

It belongs to the class-I aminoacyl-tRNA synthetase family. IleS type 2 subfamily. In terms of assembly, monomer. It depends on Zn(2+) as a cofactor.

It localises to the cytoplasm. The enzyme catalyses tRNA(Ile) + L-isoleucine + ATP = L-isoleucyl-tRNA(Ile) + AMP + diphosphate. Functionally, catalyzes the attachment of isoleucine to tRNA(Ile). As IleRS can inadvertently accommodate and process structurally similar amino acids such as valine, to avoid such errors it has two additional distinct tRNA(Ile)-dependent editing activities. One activity is designated as 'pretransfer' editing and involves the hydrolysis of activated Val-AMP. The other activity is designated 'posttransfer' editing and involves deacylation of mischarged Val-tRNA(Ile). The polypeptide is Isoleucine--tRNA ligase (Methanococcus aeolicus (strain ATCC BAA-1280 / DSM 17508 / OCM 812 / Nankai-3)).